The primary structure comprises 269 residues: Glutamate racemase (269 aa).

Substrate is bound by residues 7–8 (DS) and 39–40 (YG). Cys70 serves as the catalytic Proton donor/acceptor. 71 to 72 (NT) serves as a coordination point for substrate. Cys194 serves as the catalytic Proton donor/acceptor. 195-196 (TH) contacts substrate.

The protein belongs to the aspartate/glutamate racemases family.

The catalysed reaction is L-glutamate = D-glutamate. The protein operates within cell wall biogenesis; peptidoglycan biosynthesis. In terms of biological role, provides the (R)-glutamate required for cell wall biosynthesis. The polypeptide is Glutamate racemase (Roseobacter denitrificans (strain ATCC 33942 / OCh 114) (Erythrobacter sp. (strain OCh 114))).